The sequence spans 496 residues: MSDLNTLTLAQARDALRKGETTSVALTEACLAAIEGAGALNAFVHKTPELALERAKAADERLQGREEAPKMCGLPIGIKDLFCTKGVPSQAASRILEGFKPEYESTVSQQLADAGAVMLGKLNMDEFAMGSSNETSCYGNAVNPWRRGNDDAALTPGGSSGGSAAAVAADLCLAATGTDTGGSIRQPAAFVGITGIKPTYGRCSRWGIVAFASSLDQAGPMTKDVRDAAIMLEAMCGHDPKDSTSAELAVPDFEAMLTGDIRGKVIGIPREYRMDGMPEEIEALWQQGTEMLRAAGAEIRDISLPHTKYALPTYYVIAPAEASSNLARYDGVRYGHRAKLAQGDGITEMYEKTRAEGFGHEVQRRVMVGTYVLSAGFYDAYYNRARKVRSLIKKDFEDVFAAGVDAILTPATPSAAFGLGEMTDADPVQMYLNDVFTVTVNLAGLPGVSVPAGLDKQGLPLGLQLIGRPWEEGDLLNTAYALEQAAGFVAKPSKWW.

Residues Lys-79 and Ser-159 each act as charge relay system in the active site. Ser-183 serves as the catalytic Acyl-ester intermediate.

It belongs to the amidase family. GatA subfamily. In terms of assembly, heterotrimer of A, B and C subunits.

It carries out the reaction L-glutamyl-tRNA(Gln) + L-glutamine + ATP + H2O = L-glutaminyl-tRNA(Gln) + L-glutamate + ADP + phosphate + H(+). Functionally, allows the formation of correctly charged Gln-tRNA(Gln) through the transamidation of misacylated Glu-tRNA(Gln) in organisms which lack glutaminyl-tRNA synthetase. The reaction takes place in the presence of glutamine and ATP through an activated gamma-phospho-Glu-tRNA(Gln). In Ruegeria pomeroyi (strain ATCC 700808 / DSM 15171 / DSS-3) (Silicibacter pomeroyi), this protein is Glutamyl-tRNA(Gln) amidotransferase subunit A.